A 387-amino-acid chain; its full sequence is MDDRTREYLKGRFGDYYRRASPALPPDANLREWGHIPWTPGSGTTMLRHQSLYDLGDVDTFFADNAPRHAYFSAARYDDPGASTMSQKGWRSADLVFDLDADHLPGVDPDATSYPEMLAECKQALLRLLDFLEDDFSFDDLTVVFSGGRGYHVHVRDESVRELDSEARREVVDYVRAIDLDTEGLIRTVSERGTTKRVLRTEGGWGARVHEALIEYADDLREMDAEDARERLMELDGIGEGRAETILGAFDRNPTAVREGNVEAGGPGVRRLVSALAARVTATDTAPIDEPVTTDTRRLIRLPRTLHGGSGLVVTPIDRDDLDAFDPLRDAVPDRFVGREIRIETDVDRTVELNGERVRVEPGRNTVPEFAGVFLMARGEARKAPER.

Active-site residues include aspartate 98, aspartate 100, and aspartate 289.

This sequence belongs to the eukaryotic-type primase small subunit family. In terms of assembly, heterodimer of a small subunit (PriS) and a large subunit (PriL). Requires Mg(2+) as cofactor. The cofactor is Mn(2+).

Its function is as follows. Catalytic subunit of DNA primase, an RNA polymerase that catalyzes the synthesis of short RNA molecules used as primers for DNA polymerase during DNA replication. The small subunit contains the primase catalytic core and has DNA synthesis activity on its own. Binding to the large subunit stabilizes and modulates the activity, increasing the rate of DNA synthesis while decreasing the length of the DNA fragments, and conferring RNA synthesis capability. The DNA polymerase activity may enable DNA primase to also catalyze primer extension after primer synthesis. May also play a role in DNA repair. This is DNA primase small subunit PriS from Halorubrum lacusprofundi (strain ATCC 49239 / DSM 5036 / JCM 8891 / ACAM 34).